Here is a 160-residue protein sequence, read N- to C-terminus: Transcription elongation factor GreA (160 aa).

Residues 2–30 (SEKTYPMTLAEKEQLEQELEELKLVRRPE) are a coiled coil.

This sequence belongs to the GreA/GreB family.

Functionally, necessary for efficient RNA polymerase transcription elongation past template-encoded arresting sites. The arresting sites in DNA have the property of trapping a certain fraction of elongating RNA polymerases that pass through, resulting in locked ternary complexes. Cleavage of the nascent transcript by cleavage factors such as GreA or GreB allows the resumption of elongation from the new 3'terminus. GreA releases sequences of 2 to 3 nucleotides. The sequence is that of Transcription elongation factor GreA from Streptococcus mutans serotype c (strain ATCC 700610 / UA159).